The chain runs to 5641 residues: Cyclochlorotine synthetase (5641 aa).

Residues 95-124 are disordered; that stretch reads PENLNGHLIGSTNGHKKQWENDSADDKRGQ. Basic and acidic residues predominate over residues 111-124; that stretch reads KQWENDSADDKRGQ. The adenylation (A) domain 1 stretch occupies residues 217–622; that stretch reads FTENVQRYPT…GRRDTQVKIR (406 aa). The region spanning 816–892 is the Carrier 1 domain; that stretch reads TEEEYKIQTL…DLVSNCKMSA (77 aa). The interval 821–889 is thiolation (T) domain 1; the sequence is KIQTLKEIWS…QLSDLVSNCK (69 aa). O-(pantetheine 4'-phosphoryl)serine is present on Ser-853. Residues 926–1333 form a condensation (C) domain 1 region; that stretch reads EDVYPCTPLQ…AHVAEQIGQP (408 aa). The adenylation (A) domain 2 stretch occupies residues 1390–1768; that stretch reads DGNLTFEELN…ISRATTQIKI (379 aa). The Carrier 2 domain occupies 1902-1978; the sequence is IELSEKQENM…QLVMIATELT (77 aa). Residues 1907–1975 form a thiolation (T) domain 2 region; it reads KQENMARLWA…RFDQLVMIAT (69 aa). Ser-1939 carries the post-translational modification O-(pantetheine 4'-phosphoryl)serine. The condensation (C) domain 2 stretch occupies residues 2022-2438; it reads DIYACTPFQE…DLASEQDLAK (417 aa). An adenylation (A) domain 3 region spans residues 2459–2859; sequence AEKARQHPNK…GRADTQVKLR (401 aa). One can recognise a Carrier 3 domain in the interval 2976–3052; the sequence is GPLTEMETTL…GMAIKIQPIH (77 aa). The segment at 2977-3049 is thiolation (T) domain 3; sequence PLTEMETTLA…NLAGMAIKIQ (73 aa). Ser-3013 is subject to O-(pantetheine 4'-phosphoryl)serine. The segment at 3089–3482 is condensation (C) domain 3; it reads DIYPCTPLQV…LETVLSAFST (394 aa). The segment at 3523–3873 is adenylation (A) domain 4; sequence VQRAPDKVAI…IARKDLQVKL (351 aa). One can recognise a Carrier 4 domain in the interval 4005–4081; that stretch reads IPSTPTEMKM…ELATKIAPRI (77 aa). A thiolation (T) domain 4 region spans residues 4010–4078; that stretch reads TEMKMQQLWA…RLSELATKIA (69 aa). Ser-4042 carries the O-(pantetheine 4'-phosphoryl)serine modification. The tract at residues 4123–4549 is condensation (C) domain 4; sequence KDVYPCTPLQ…QSLDSLSQQD (427 aa). Residues 4574 to 4982 form an adenylation (A) domain 5 region; sequence QEIAGRHPDA…GRIGTDIKLR (409 aa). Positions 5118 to 5194 constitute a Carrier 5 domain; the sequence is PPSTQEEKVI…SLAEKISWES (77 aa). A thiolation (T) domain 5 region spans residues 5123–5191; that stretch reads EEKVIAALWA…KLASLAEKIS (69 aa). O-(pantetheine 4'-phosphoryl)serine is present on Ser-5155. The segment at 5260–5556 is condensation (C) domain 5; sequence AYLDIGPDVQ…DKCTTCVSGS (297 aa).

The protein belongs to the NRP synthetase family.

It functions in the pathway mycotoxin biosynthesis. Nonribosomal peptide synthetase; part of the gene cluster that mediates the biosynthesis of the mycotoxin cyclochlorotine, a hepatotoxic and carcinogenic cyclic chlorinated pentapeptide. Within the pathway, The NRPS cctN initially catalyzes the condensation of L-serine (Ser), Pro, L-2-aminobutyrate (2Abu), Ser, and beta-Phe in this order. During the chain elongation, side-chain hydroxy group of Ser4 would be used as a nucleophile, giving isocyclotine as a product of terminal condensation-like (CT) domain-catalyzed cyclization. After the dichlorination of Pro2 catalyzed by cctP2 to produce isocyclochlorotine, the cctO-mediated transacylation of isocyclochlorotine can furnish cyclochlorotine. The subsequent hydroxylation of cyclochlorotine by cctR yields hydroxycyclochlorotine as the final product. CctP1 probably acts as a phenylalanine aminomutase and provides the uncommon building block beta-Phe. Furthermore, 2Abu can be synthesized from threonine by one of the threonine dehydratases and transaminases localized outside of the cluster. The functions of the remaining proteins encoded by the cluster, cctM and cctT, have not been identified yet. This chain is Cyclochlorotine synthetase, found in Talaromyces islandicus (Penicillium islandicum).